A 391-amino-acid chain; its full sequence is Putative penicillin-binding protein PbpX (391 aa).

The chain crosses the membrane as a helical span at residues 21–40 (GKLLFGLLAVMVCITIWNAL). The tract at residues 44-76 (SEENEPSQETAAVSNTDQKKEVKKKTAKKSEEQ) is disordered. Residues 50 to 59 (SQETAAVSNT) are compositionally biased toward polar residues.

Belongs to the beta-lactamase family.

The protein resides in the cell membrane. In Bacillus subtilis (strain 168), this protein is Putative penicillin-binding protein PbpX (pbpX).